Consider the following 685-residue polypeptide: Hemocyanin subunit X (685 aa).

The N-terminal stretch at Met-1–Ala-20 is a signal peptide. Residues His-210, His-214, and His-243 each coordinate Cu cation. Asn-329 carries N-linked (GlcNAc...) asparagine glycosylation. Cu cation is bound by residues His-367, His-371, and His-407. An intrachain disulfide couples Cys-577 to Cys-625.

This sequence belongs to the tyrosinase family. Hemocyanin subfamily.

It localises to the secreted. The protein resides in the extracellular space. Hemocyanins are copper-containing oxygen carriers occurring freely dissolved in the hemolymph of many mollusks and arthropods. In Scutigera coleoptrata (House centipede), this protein is Hemocyanin subunit X (HCX).